Reading from the N-terminus, the 226-residue chain is 2-C-methyl-D-erythritol 4-phosphate cytidylyltransferase (226 aa).

Belongs to the IspD/TarI cytidylyltransferase family. IspD subfamily.

The enzyme catalyses 2-C-methyl-D-erythritol 4-phosphate + CTP + H(+) = 4-CDP-2-C-methyl-D-erythritol + diphosphate. It participates in isoprenoid biosynthesis; isopentenyl diphosphate biosynthesis via DXP pathway; isopentenyl diphosphate from 1-deoxy-D-xylulose 5-phosphate: step 2/6. Its function is as follows. Catalyzes the formation of 4-diphosphocytidyl-2-C-methyl-D-erythritol from CTP and 2-C-methyl-D-erythritol 4-phosphate (MEP). This Bacillus mycoides (strain KBAB4) (Bacillus weihenstephanensis) protein is 2-C-methyl-D-erythritol 4-phosphate cytidylyltransferase.